Reading from the N-terminus, the 577-residue chain is MGHAEWIGRTNTAVARSAVGKWFRLEGSGHPRERKGAYFFTELRAGLATFFAMAYIISVNANITSDTGATCVCPAEDLETHCNNNTEYLLCKQEVNRDIVTATAAIASVASFFLGLLANLPVALAPGMGLNAYFAYTVVGHHGSGLIPYSLAVTAVFVEGWIFLGLTMLGIRQWLARAIPASIKLATGAGIGLYLTLIGLSYSAGLGLVQGAQDSPIQLAGCASDEFDSDGLCPSYAKMRNPTMWIGIFCGGFFTVFLMMYRVKGAVIAGILLVSIISWPRTTPVTYFPHTTEGDSMFDFFKKVVTFHPIQHTLVAQDWNISSNGGQFGLALITFLYVDILDATGTLYSMAKFAGAMDERTQDFEGSAMAYTVDAICISIGSLFGSPPVTAFVESGAGISEGGKTGLTSCMTGICFFIAVFFAPIFASIPPWATGSTLVIVGSMMMHATLEINWRYMGDAIPAFLTISVMPFTYSIADGLIAGIISYILINGGVWVIAKCTGGRIVPPNRDDEHEAWTWKIPGGFFPPWLVRAVHGKKDFWRADDEASQLDLGVMPPNGSMSSGSPEQVAEKAVGKY.

Asn62 and Asn84 each carry an N-linked (GlcNAc...) asparagine glycan. The next 5 membrane-spanning stretches (helical) occupy residues 104 to 124 (AAIA…PVAL), 151 to 171 (LAVT…MLGI), 189 to 209 (AGIG…LGLV), 241 to 261 (NPTM…LMMY), and 265 to 285 (GAVI…TTPV). Asn320 is a glycosylation site (N-linked (GlcNAc...) asparagine). Helical transmembrane passes span 328-348 (FGLA…GTLY), 373-393 (VDAI…TAFV), 413-433 (GICF…PPWA), 434-454 (TGST…EINW), and 476-496 (IADG…GVWV). Residues 555-566 (MPPNGSMSSGSP) show a composition bias toward low complexity. The tract at residues 555-577 (MPPNGSMSSGSPEQVAEKAVGKY) is disordered. The N-linked (GlcNAc...) asparagine glycan is linked to Asn558.

The protein belongs to the nucleobase:cation symporter-2 (NCS2) (TC 2.A.40) family. Azg-like subfamily.

The protein localises to the cell membrane. Its function is as follows. Efflux pump; part of the gene cluster that mediates the biosynthesis of notoamide, a fungal indole alkaloid that belongs to a family of natural products containing a characteristic bicyclo[2.2.2]diazaoctane core. In Aspergillus versicolor, this protein is Efflux pump notK'.